Here is a 171-residue protein sequence, read N- to C-terminus: S-ribosylhomocysteine lyase (171 aa).

Fe cation contacts are provided by His-54, His-58, and Cys-128.

Belongs to the LuxS family. As to quaternary structure, homodimer. Requires Fe cation as cofactor.

The catalysed reaction is S-(5-deoxy-D-ribos-5-yl)-L-homocysteine = (S)-4,5-dihydroxypentane-2,3-dione + L-homocysteine. Functionally, involved in the synthesis of autoinducer 2 (AI-2) which is secreted by bacteria and is used to communicate both the cell density and the metabolic potential of the environment. The regulation of gene expression in response to changes in cell density is called quorum sensing. Catalyzes the transformation of S-ribosylhomocysteine (RHC) to homocysteine (HC) and 4,5-dihydroxy-2,3-pentadione (DPD). This chain is S-ribosylhomocysteine lyase, found in Citrobacter koseri (strain ATCC BAA-895 / CDC 4225-83 / SGSC4696).